A 336-amino-acid chain; its full sequence is Nicotinate-nucleotide--dimethylbenzimidazole phosphoribosyltransferase (336 aa).

Positions 20-41 (GPDAAARAGAEERNGQLTKPPG) are disordered. Glutamate 304 acts as the Proton acceptor in catalysis.

Belongs to the CobT family.

It catalyses the reaction 5,6-dimethylbenzimidazole + nicotinate beta-D-ribonucleotide = alpha-ribazole 5'-phosphate + nicotinate + H(+). Its pathway is nucleoside biosynthesis; alpha-ribazole biosynthesis; alpha-ribazole from 5,6-dimethylbenzimidazole: step 1/2. Functionally, catalyzes the synthesis of alpha-ribazole-5'-phosphate from nicotinate mononucleotide (NAMN) and 5,6-dimethylbenzimidazole (DMB). The sequence is that of Nicotinate-nucleotide--dimethylbenzimidazole phosphoribosyltransferase from Ruegeria pomeroyi (strain ATCC 700808 / DSM 15171 / DSS-3) (Silicibacter pomeroyi).